The following is a 183-amino-acid chain: Ribosome maturation factor RimM (183 aa).

The 82-residue stretch at 102-183 folds into the PRC barrel domain; the sequence is DDDFYWHQLE…CITVDWDPEF (82 aa).

This sequence belongs to the RimM family. In terms of assembly, binds ribosomal protein uS19.

It is found in the cytoplasm. Functionally, an accessory protein needed during the final step in the assembly of 30S ribosomal subunit, possibly for assembly of the head region. Essential for efficient processing of 16S rRNA. May be needed both before and after RbfA during the maturation of 16S rRNA. It has affinity for free ribosomal 30S subunits but not for 70S ribosomes. This Saccharophagus degradans (strain 2-40 / ATCC 43961 / DSM 17024) protein is Ribosome maturation factor RimM.